The chain runs to 167 residues: ATP synthase subunit b (167 aa).

The helical transmembrane segment at 7 to 25 threads the bilayer; it reads SFWLTISFVIFVYLIYRPA.

This sequence belongs to the ATPase B chain family. F-type ATPases have 2 components, F(1) - the catalytic core - and F(0) - the membrane proton channel. F(1) has five subunits: alpha(3), beta(3), gamma(1), delta(1), epsilon(1). F(0) has three main subunits: a(1), b(2) and c(10-14). The alpha and beta chains form an alternating ring which encloses part of the gamma chain. F(1) is attached to F(0) by a central stalk formed by the gamma and epsilon chains, while a peripheral stalk is formed by the delta and b chains.

Its subcellular location is the cell inner membrane. F(1)F(0) ATP synthase produces ATP from ADP in the presence of a proton or sodium gradient. F-type ATPases consist of two structural domains, F(1) containing the extramembraneous catalytic core and F(0) containing the membrane proton channel, linked together by a central stalk and a peripheral stalk. During catalysis, ATP synthesis in the catalytic domain of F(1) is coupled via a rotary mechanism of the central stalk subunits to proton translocation. Functionally, component of the F(0) channel, it forms part of the peripheral stalk, linking F(1) to F(0). This Rickettsia prowazekii (strain Madrid E) protein is ATP synthase subunit b.